Reading from the N-terminus, the 202-residue chain is Glycerol-3-phosphate acyltransferase (202 aa).

The next 6 helical transmembrane spans lie at 3–23 (NLII…LILA), 61–81 (IATI…LKFL), 87–107 (LLWS…YLLF), 118–138 (GAMI…WVVI), 144–164 (ISSL…FIFN), and 167–187 (LEIH…YKHL).

The protein belongs to the PlsY family. As to quaternary structure, probably interacts with PlsX.

The protein resides in the cell inner membrane. It carries out the reaction an acyl phosphate + sn-glycerol 3-phosphate = a 1-acyl-sn-glycero-3-phosphate + phosphate. It functions in the pathway lipid metabolism; phospholipid metabolism. Its function is as follows. Catalyzes the transfer of an acyl group from acyl-phosphate (acyl-PO(4)) to glycerol-3-phosphate (G3P) to form lysophosphatidic acid (LPA). This enzyme utilizes acyl-phosphate as fatty acyl donor, but not acyl-CoA or acyl-ACP. The chain is Glycerol-3-phosphate acyltransferase from Campylobacter jejuni subsp. jejuni serotype O:6 (strain 81116 / NCTC 11828).